We begin with the raw amino-acid sequence, 165 residues long: uncharacterized protein (165 aa).

This is an uncharacterized protein from Aquifex aeolicus (strain VF5).